Here is a 131-residue protein sequence, read N- to C-terminus: Histone H2B.2 (131 aa).

Residues methionine 1–proline 19 are compositionally biased toward basic and acidic residues. The disordered stretch occupies residues methionine 1 to arginine 37. Lysine 7 and lysine 8 each carry N6-acetyllysine; alternate. Residues lysine 7 and lysine 8 each participate in a glycyl lysine isopeptide (Lys-Gly) (interchain with G-Cter in SUMO); alternate cross-link. Serine 11 is modified (phosphoserine). An N6-acetyllysine modification is found at lysine 12. 4 positions are modified to N6-acetyllysine; alternate: lysine 17, lysine 18, lysine 22, and lysine 23. Residues lysine 17 and lysine 18 each participate in a glycyl lysine isopeptide (Lys-Gly) (interchain with G-Cter in SUMO); alternate cross-link. Lysine 22 carries the post-translational modification N6-butyryllysine; alternate. Lysine 23 is subject to N6-methyllysine; alternate. Residue lysine 35 is modified to N6-succinyllysine. An N6,N6-dimethyllysine modification is found at lysine 38. Position 47 is an N6-succinyllysine (lysine 47). Lysine 124 participates in a covalent cross-link: Glycyl lysine isopeptide (Lys-Gly) (interchain with G-Cter in ubiquitin).

The protein belongs to the histone H2B family. In terms of assembly, the nucleosome is a histone octamer containing two molecules each of H2A, H2B, H3 and H4 assembled in one H3-H4 heterotetramer and two H2A-H2B heterodimers. The octamer wraps approximately 147 bp of DNA. Interacts with NAP1. Monoubiquitinated by the RAD6/UBC2-BRE1 complex to form H2BK123ub1. H2BK123ub1 gives a specific tag for epigenetic transcriptional activation and is also prerequisite for H3K4me and H3K79me formation. H2BK123ub1 also modulates the formation of double-strand breaks during meiosis and is a prerequisite for DNA-damage checkpoint activation. Deubiquitination is performed by UBP8 in presence of SGF11. Post-translationally, phosphorylated by STE20 to form H2BS10ph during progression through meiotic prophase. May be correlated with chromosome condensation. H2BS10ph is also formed after H(2)O(2) treatment, and is a step leading to apoptosis. In terms of processing, acetylated by GCN5, a component of the SAGA complex, to form H2BK11ac and H2BK16ac. H2BK16ac can also be formed by ESA1, a component of the NuA4 histone acetyltransferase (HAT) complex. Acetylation of N-terminal lysines and particularly formation of H2BK11acK16ac has a positive effect on transcription. Sumoylation to form H2BK6su or H2BK7su, and probably also H2BK16su or H2BK17su, occurs preferentially near the telomeres and represses gene transcription.

It localises to the nucleus. It is found in the chromosome. Core component of nucleosome. Nucleosomes wrap and compact DNA into chromatin, limiting DNA accessibility to the cellular machineries which require DNA as a template. Histones thereby play a central role in transcription regulation, DNA repair, DNA replication and chromosomal stability. DNA accessibility is regulated via a complex set of post-translational modifications of histones, also called histone code, and nucleosome remodeling. The protein is Histone H2B.2 (HTB2) of Saccharomyces cerevisiae (strain ATCC 204508 / S288c) (Baker's yeast).